We begin with the raw amino-acid sequence, 354 residues long: DNA polymerase IV (354 aa).

Residues 14 to 198 (IIHIDMDAFF…MDIAKFHGVG (185 aa)) form the UmuC domain. Mg(2+)-binding residues include Asp-18 and Asp-116. Glu-117 is a catalytic residue.

Belongs to the DNA polymerase type-Y family. In terms of assembly, monomer. It depends on Mg(2+) as a cofactor.

Its subcellular location is the cytoplasm. The enzyme catalyses DNA(n) + a 2'-deoxyribonucleoside 5'-triphosphate = DNA(n+1) + diphosphate. In terms of biological role, poorly processive, error-prone DNA polymerase involved in untargeted mutagenesis. Copies undamaged DNA at stalled replication forks, which arise in vivo from mismatched or misaligned primer ends. These misaligned primers can be extended by PolIV. Exhibits no 3'-5' exonuclease (proofreading) activity. May be involved in translesional synthesis, in conjunction with the beta clamp from PolIII. The sequence is that of DNA polymerase IV from Streptococcus sanguinis (strain SK36).